Reading from the N-terminus, the 450-residue chain is Tubulin alpha-3 chain (450 aa).

Q11 serves as a coordination point for GTP. K40 carries the post-translational modification N6-acetyllysine. GTP is bound by residues E71, S140, G144, T145, T179, N206, and N228. Position 71 (E71) interacts with Mg(2+). Residue E254 is part of the active site.

This sequence belongs to the tubulin family. Dimer of alpha and beta chains. A typical microtubule is a hollow water-filled tube with an outer diameter of 25 nm and an inner diameter of 15 nM. Alpha-beta heterodimers associate head-to-tail to form protofilaments running lengthwise along the microtubule wall with the beta-tubulin subunit facing the microtubule plus end conferring a structural polarity. Microtubules usually have 13 protofilaments but different protofilament numbers can be found in some organisms and specialized cells. Mg(2+) is required as a cofactor. Undergoes a tyrosination/detyrosination cycle, the cyclic removal and re-addition of a C-terminal tyrosine residue by the enzymes tubulin tyrosine carboxypeptidase (TTCP) and tubulin tyrosine ligase (TTL), respectively. Post-translationally, acetylation of alpha chains at Lys-40 stabilizes microtubules and affects affinity and processivity of microtubule motors. This modification has a role in multiple cellular functions, ranging from cell motility, cell cycle progression or cell differentiation to intracellular trafficking and signaling. During the early stages of oogenesis lky/Alpha-tubulin N-acetyltransferase 2 is the main acetyltransferase responsible for Lys-40 acetylation in germline cells while Atat/alpha-tubulin N-acetyltransferase 1 is the main acetyltransferase responsible for Lys-40 acetylation in somatic cells.

The protein localises to the cytoplasm. It is found in the cytoskeleton. It catalyses the reaction GTP + H2O = GDP + phosphate + H(+). Its function is as follows. Tubulin is the major constituent of microtubules, a cylinder consisting of laterally associated linear protofilaments composed of alpha- and beta-tubulin heterodimers. Microtubules grow by the addition of GTP-tubulin dimers to the microtubule end, where a stabilizing cap forms. Below the cap, tubulin dimers are in GDP-bound state, owing to GTPase activity of alpha-tubulin. The polypeptide is Tubulin alpha-3 chain (alphaTub84D) (Drosophila melanogaster (Fruit fly)).